We begin with the raw amino-acid sequence, 588 residues long: Arginine--tRNA ligase (588 aa).

A 'HIGH' region motif is present at residues 124–134 (PNVAKPMHVGH).

The protein belongs to the class-I aminoacyl-tRNA synthetase family. Monomer.

It is found in the cytoplasm. It carries out the reaction tRNA(Arg) + L-arginine + ATP = L-arginyl-tRNA(Arg) + AMP + diphosphate. The protein is Arginine--tRNA ligase of Maricaulis maris (strain MCS10) (Caulobacter maris).